The primary structure comprises 515 residues: MTTEPGYLSPSVAVATSMPKRGVGAAVLIVPVVSTGEEDRPGAVVASAEPFLRADTVAEIEAGLRALDATGASDQVHRLAVPSLPVGSVLTVGLGKPRREWPADTIRCAAGVAARALNSSEAVITTLAELPGDGICSATVEGLILGSYRFSAFRSDKTAPKDAGLRKITVLCCAKDAKKRALHGAAVATAVATARDLVNTPPSHLFPAELAKRAKTLSESVGLDVEVIDEKALKKAGYGGVIGVGQGSSRPPRLVRLIHRGSRLAKNPQKAKKVALVGKGITFDTGGISIKPAASMHHMTSDMGGAAAVIATVTLAARLRLPIDVIATVPMAENMPSATAQRPGDVLTQYGGTTVEVLNTDAEGRLILADAIVRACEDKPDYLIETSTLTGAQTVALGTRIPGVMGSDEFRDRVAAISQRVGENGWPMPLPDDLKDDLKSTVADLANVSGQRFAGMLVAGVFLREFVAESVDWAHIDVAGPAYNTGSAWGYTPKGATGVPTRTMFAVLEDIAKNG.

Mn(2+) contacts are provided by Lys279 and Asp284. Lys291 is an active-site residue. 3 residues coordinate Mn(2+): Asp302, Asp361, and Glu363. Arg365 is a catalytic residue.

It belongs to the peptidase M17 family. Requires Mn(2+) as cofactor.

The protein localises to the cytoplasm. It carries out the reaction Release of an N-terminal amino acid, Xaa-|-Yaa-, in which Xaa is preferably Leu, but may be other amino acids including Pro although not Arg or Lys, and Yaa may be Pro. Amino acid amides and methyl esters are also readily hydrolyzed, but rates on arylamides are exceedingly low.. The catalysed reaction is Release of an N-terminal amino acid, preferentially leucine, but not glutamic or aspartic acids.. In terms of biological role, presumably involved in the processing and regular turnover of intracellular proteins. Catalyzes the removal of unsubstituted N-terminal amino acids from various peptides. This is Probable cytosol aminopeptidase from Mycobacterium bovis (strain ATCC BAA-935 / AF2122/97).